The primary structure comprises 200 residues: Late embryogenesis abundant protein 19 (200 aa).

2 disordered regions span residues 1 to 158 (MASH…KSTV) and 172 to 200 (TEDK…ARDH). Composition is skewed to basic and acidic residues over residues 13–23 (GETKAHTEEKA), 30–42 (SKDK…DRAS), 53–81 (QDTK…KDKT), 88–97 (ARDKAAESKD), and 105–114 (EKTEQAKQKA). Positions 52-81 (GQDTKEATKEKAQAAKERASETAQAAKDKT) form a coiled coil. Residues 115 to 130 (AETAGAAKQKTAETAQ) are compositionally biased toward low complexity. Over residues 145–156 (SVLQQASEQVKS) the composition is skewed to polar residues. A compositionally biased stretch (basic and acidic residues) spans 172 to 183 (TEDKAGTDDGAN). A compositionally biased stretch (low complexity) spans 186–200 (TSATAAATETTARDH).

The protein belongs to the LEA type 4 family. Expressed in the shoot apex and leaves.

In terms of biological role, involved in response to drought stress. The protein is Late embryogenesis abundant protein 19 of Oryza sativa subsp. indica (Rice).